The sequence spans 754 residues: 5-methyltetrahydropteroyltriglutamate--homocysteine methyltransferase (754 aa).

Residues 17-20 (RELK) and Lys-117 contribute to the 5-methyltetrahydropteroyltri-L-glutamate site. L-homocysteine contacts are provided by residues 431–433 (IGS) and Glu-484. Residues 431–433 (IGS) and Glu-484 each bind L-methionine. Residues 515–516 (RC) and Trp-561 each bind 5-methyltetrahydropteroyltri-L-glutamate. Residue Asp-599 participates in L-homocysteine binding. An L-methionine-binding site is contributed by Asp-599. Residue Glu-605 coordinates 5-methyltetrahydropteroyltri-L-glutamate. Positions 641, 643, and 665 each coordinate Zn(2+). Residue His-694 is the Proton donor of the active site. A Zn(2+)-binding site is contributed by Cys-726.

Belongs to the vitamin-B12 independent methionine synthase family. Zn(2+) serves as cofactor.

The enzyme catalyses 5-methyltetrahydropteroyltri-L-glutamate + L-homocysteine = tetrahydropteroyltri-L-glutamate + L-methionine. Its pathway is amino-acid biosynthesis; L-methionine biosynthesis via de novo pathway; L-methionine from L-homocysteine (MetE route): step 1/1. In terms of biological role, catalyzes the transfer of a methyl group from 5-methyltetrahydrofolate to homocysteine resulting in methionine formation. The chain is 5-methyltetrahydropteroyltriglutamate--homocysteine methyltransferase from Salmonella dublin (strain CT_02021853).